The primary structure comprises 2045 residues: Host cell factor 1 (2045 aa).

Alanine 2 carries the post-translational modification N-acetylalanine. At serine 6 the chain carries Phosphoserine. Kelch repeat units follow at residues 44–89 (LIVV…GFVC), 93–140 (RLLV…RLGH), 148–194 (KCYL…ITYG), 217–265 (KLVI…TIGN), and 266–313 (KMYV…LMDT). Residues lysine 105, lysine 163, and lysine 244 each participate in a glycyl lysine isopeptide (Lys-Gly) (interchain with G-Cter in ubiquitin) cross-link. Lysine 282 participates in a covalent cross-link: Glycyl lysine isopeptide (Lys-Gly) (interchain with G-Cter in SUMO2). Lysine 288 bears the N6-acetyllysine mark. A Glycyl lysine isopeptide (Lys-Gly) (interchain with G-Cter in ubiquitin) cross-link involves residue lysine 363. Residues 366–457 (PPARVQLVRA…VPQAATAPPS (92 aa)) form the Fibronectin type-III 1 domain. Residues 407-434 (ATATSPTPNPVPSVPANPPKSPAPAAAA) are disordered. Position 411 is a phosphoserine (serine 411). The span at 413–428 (TPNPVPSVPANPPKSP) shows a compositional bias: pro residues. A required for interaction with OGT region spans residues 500-550 (LVTMRPASQAGKAPVTVTSLPASVRMVVPTQSAQGTVIGSNPQMSGMAALA). Omega-N-methylarginine is present on residues arginine 504 and arginine 524. Phosphoserine is present on residues serine 598, serine 666, and serine 669. Residues 610 to 722 (LKTAAAQVGT…KGPLPAGTIL (113 aa)) form an interaction with SIN3A region. The interval 750-902 (ILGISSVSPS…SLAGAGAHST (153 aa)) is interaction with ZBTB17. N6-acetyllysine is present on lysine 813. An interaction with GABP2 region spans residues 813-912 (KIITAVPKIA…SASLATPITT (100 aa)). HCF repeat repeat units follow at residues 1010–1035 (TLVC…TVVA), 1072–1097 (VRVC…ATSN), and 1101–1126 (QHGC…AMSS). An HCF repeat 4; degenerate repeat occupies 1157-1182 (VQGTVKPQCQTQQTNMTTTTMTVQAT). A Phosphoserine modification is found at serine 1204. Position 1216 is an asymmetric dimethylarginine (arginine 1216). Disordered stretches follow at residues 1219–1242 (LSGP…YTTN), 1302–1375 (PCET…TSTG), 1444–1475 (TVTS…STNI), and 1494–1525 (TTVT…QLPP). Serine 1223 carries the post-translational modification Phosphoserine. 2 HCF repeat repeats span residues 1295 to 1320 (TQVC…SNAG) and 1323 to 1348 (QRVC…ATSN). A compositionally biased stretch (low complexity) spans 1308–1321 (TGTTNTATTSNAGS). The HCF repeat 7; degenerate repeat unit spans residues 1358 to 1383 (QQPASGHPCETHQTTSTGTTMSVSVG). Residues 1423 to 1448 (QRVCSNPPCETHETGTTHTATTVTSN) form an HCF repeat 8 repeat. A Phosphothreonine modification is found at threonine 1500. The segment covering 1502 to 1511 (VPGPSVPPPE) has biased composition (pro residues). Residues serine 1506, serine 1516, and serine 1781 each carry the phosphoserine modification. Fibronectin type-III domains follow at residues 1808 to 1898 (PPPP…TCLP) and 1900 to 2016 (FPGA…TSKD). Residues lysine 1817 and lysine 1818 each participate in a glycyl lysine isopeptide (Lys-Gly) (interchain with G-Cter in ubiquitin) cross-link. Residue serine 1848 is modified to Phosphoserine. Residues 2004–2045 (ATQVRWLQETSKDSSGTKPASKRPMSSPEMKSAPKKSKADGQ) form a disordered region. At lysine 2015 the chain carries N6-acetyllysine. Lysine 2034 is covalently cross-linked (Glycyl lysine isopeptide (Lys-Gly) (interchain with G-Cter in SUMO2)).

Composed predominantly of six polypeptides ranging from 110 to 150 kDa and a minor 300 kDa polypeptide. The majority of N- and C-terminal cleavage products remain tightly, albeit non-covalently, associated. Interacts with POU2F1, CREB3, ZBTB17, EGR2, E2F4, CREBZF, SP1, GABP2, Sin3 HDAC complex (SIN3A, HDAC1, HDAC2, SUDS3), SAP30, SIN3B and FHL2. Component of a MLL1 complex, composed of at least the core components KMT2A/MLL1, ASH2L, HCFC1, WDR5 and RBBP5, as well as the facultative components BACC1, CHD8, DPY30, E2F6, HCFC2, HSP70, INO80C, KANSL1, LAS1L, MAX, MCRS1, MEN1, MGA, KAT8, PELP1, PHF20, PRP31, RING2, RUVBL1, RUVBL2, SENP3, TAF1, TAF4, TAF6, TAF7, TAF9 and TEX10. Component of a THAP1/THAP3-HCFC1-OGT complex that is required for the regulation of the transcriptional activity of RRM1. Interacts directly with THAP3 (via its HBM). Interacts (via the Kelch-repeat domain) with THAP1 (via the HBM); the interaction recruits HCHC1 to the RRM1. Interacts with THAP7 and THAP11 (via the HMB). Interacts directly with OGT; the interaction, which requires the HCFC1 cleavage site domain, glycosylates and promotes the proteolytic processing of HCFC1 and retains OGT in the nucleus. Component of the SET1 complex, at least composed of the catalytic subunit (SETD1A or SETD1B), WDR5, WDR82, RBBP5, ASH2L, CXXC1, HCFC1 and DPY30. Component of the NSL complex at least composed of MOF/KAT8, KANSL1, KANSL2, KANSL3, MCRS1, PHF20, OGT1/OGT, WDR5 and HCFC1. Component of a complex at least composed of ZNF335, HCFC1, CCAR2, EMSY, MKI67, RBBP5, ASH2L and WDR5; the complex is formed as a result of interactions between components of a nuclear receptor-mediated transcription complex and a histone methylation complex. Within the complex interacts with ZNF335. Interacts with TET2 and TET3. Interacts with HCFC1R1. Interacts with THAP11. Interacts (via Kelch domain) with KMT2E (via HBM motif). Interacts with E2F1. Accessory scaffold component of the polycomb repressive deubiquitinase (PR-DUB) complex, at least composed of BAP1, one of ASXL1, ASXL2 or (probably) ASXL3 and one of MBD5 or MBD6; the PR-DUB core associates with a number of accessory proteins, including FOXK1, FOXK2, KDM1B, HCFC1, YY1 and OGT. Interacts with YY1 (via Gly-rich region); the interaction is direct. Interacts with BAP1 (via HBM-like motif). In terms of processing, proteolytically cleaved at one or several PPCE--THET sites within the HCF repeats. Further cleavage of the primary N- and C-terminal chains results in a 'trimming' and accumulation of the smaller chains. Cleavage is promoted by O-glycosylation. Post-translationally, O-glycosylated. GlcNAcylation by OGT promotes proteolytic processing. Ubiquitinated. Lys-1817 and Lys-1818 are ubiquitinated both via 'Lys-48'- and 'Lys-63'-linked polyubiquitin chains. BAP1 mediated deubiquitination of 'Lys-48'-linked polyubiquitin chains; deubiquitination by BAP1 does not seem to stabilize the protein. Expressed in liver, pituitary gland, skeletal muscle, kidney, eye and brain (at protein level). Also observed at low level in heart, spleen and lung.

The protein localises to the nucleus. Its subcellular location is the cytoplasm. Functionally, transcriptional coregulator. Serves as a scaffold protein, bridging interactions between transcription factors, including THAP11 and ZNF143, and transcriptional coregulators. Involved in control of the cell cycle. Also antagonizes transactivation by ZBTB17 and GABP2; represses ZBTB17 activation of the p15(INK4b) promoter and inhibits its ability to recruit p300. Coactivator for EGR2 and GABP2. Tethers the chromatin modifying Set1/Ash2 histone H3 'Lys-4' methyltransferase (H3K4me) and Sin3 histone deacetylase (HDAC) complexes (involved in the activation and repression of transcription respectively) together. As part of the NSL complex it may be involved in acetylation of nucleosomal histone H4 on several lysine residues. Recruits KMT2E to E2F1 responsive promoters promoting transcriptional activation and thereby facilitates G1 to S phase transition. Modulates expression of homeobox protein PDX1, perhaps acting in concert with transcription factor E2F1, thereby regulating pancreatic beta-cell growth and glucose-stimulated insulin secretion. May negatively modulate transcriptional activity of FOXO3. This Mus musculus (Mouse) protein is Host cell factor 1.